We begin with the raw amino-acid sequence, 464 residues long: Glucose-6-phosphate isomerase (464 aa).

Residue Glu-290 is the Proton donor of the active site. Residues His-319 and Lys-433 contribute to the active site.

The protein belongs to the GPI family.

Its subcellular location is the cytoplasm. It catalyses the reaction alpha-D-glucose 6-phosphate = beta-D-fructose 6-phosphate. The protein operates within carbohydrate biosynthesis; gluconeogenesis. It functions in the pathway carbohydrate degradation; glycolysis; D-glyceraldehyde 3-phosphate and glycerone phosphate from D-glucose: step 2/4. Functionally, catalyzes the reversible isomerization of glucose-6-phosphate to fructose-6-phosphate. The polypeptide is Glucose-6-phosphate isomerase (Carboxydothermus hydrogenoformans (strain ATCC BAA-161 / DSM 6008 / Z-2901)).